The primary structure comprises 360 residues: GTP 3',8-cyclase 2 (360 aa).

The Radical SAM core domain occupies 33 to 259 (TFGRVANDLR…PDPAPRGSAP (227 aa)). R42 is a GTP binding site. [4Fe-4S] cluster is bound by residues C49 and C53. Y55 is an S-adenosyl-L-methionine binding site. A [4Fe-4S] cluster-binding site is contributed by C56. Position 93 (R93) interacts with GTP. G97 is an S-adenosyl-L-methionine binding site. T124 contacts GTP. Residue S148 coordinates S-adenosyl-L-methionine. Position 185 (K185) interacts with GTP. Position 219 (M219) interacts with S-adenosyl-L-methionine. The [4Fe-4S] cluster site is built by C287 and C290. 292 to 294 (RTR) serves as a coordination point for GTP. C304 contacts [4Fe-4S] cluster.

Belongs to the radical SAM superfamily. MoaA family. Monomer and homodimer. [4Fe-4S] cluster is required as a cofactor.

The enzyme catalyses GTP + AH2 + S-adenosyl-L-methionine = (8S)-3',8-cyclo-7,8-dihydroguanosine 5'-triphosphate + 5'-deoxyadenosine + L-methionine + A + H(+). The protein operates within cofactor biosynthesis; molybdopterin biosynthesis. Its function is as follows. Catalyzes the cyclization of GTP to (8S)-3',8-cyclo-7,8-dihydroguanosine 5'-triphosphate. The protein is GTP 3',8-cyclase 2 of Mycobacterium bovis (strain ATCC BAA-935 / AF2122/97).